The sequence spans 259 residues: Aliphatic sulfonates import ATP-binding protein SsuB 1 (259 aa).

An ABC transporter domain is found at 15–229 (VECRRITRRF…QASTPGFQAL (215 aa)). Residue 47–54 (GSSGSGKT) participates in ATP binding.

Belongs to the ABC transporter superfamily. Aliphatic sulfonates importer (TC 3.A.1.17.2) family. In terms of assembly, the complex is composed of two ATP-binding proteins (SsuB), two transmembrane proteins (SsuC) and a solute-binding protein (SsuA).

Its subcellular location is the cell inner membrane. The enzyme catalyses ATP + H2O + aliphatic sulfonate-[sulfonate-binding protein]Side 1 = ADP + phosphate + aliphatic sulfonateSide 2 + [sulfonate-binding protein]Side 1.. In terms of biological role, part of the ABC transporter complex SsuABC involved in aliphatic sulfonates import. Responsible for energy coupling to the transport system. The sequence is that of Aliphatic sulfonates import ATP-binding protein SsuB 1 from Pseudomonas fluorescens (strain ATCC BAA-477 / NRRL B-23932 / Pf-5).